Reading from the N-terminus, the 570-residue chain is 4-hydroxy-7-methoxy-3-oxo-3,4-dihydro-2H-1,4-benzoxazin-2-yl glucoside beta-D-glucosidase 1c, chloroplastic (570 aa).

A chloroplast-targeting transit peptide spans 1–50; it reads MALLAAATLNPTTHLSIRSRAGHNSENLWLRSAASSQKSKGRFCNLTVRA. Residues glutamine 92, histidine 194, and 239 to 240 each bind a beta-D-glucoside; that span reads NE. Glutamate 240 acts as the Proton donor in catalysis. Cysteine 259 and cysteine 265 are joined by a disulfide. A beta-D-glucoside contacts are provided by residues tyrosine 383, glutamate 456, tryptophan 504, 511-512, and phenylalanine 520; that span reads EW. Glutamate 456 (nucleophile) is an active-site residue.

This sequence belongs to the glycosyl hydrolase 1 family. As to quaternary structure, homo- and heterohexamers. In terms of tissue distribution, expressed in young seedlings early after germination.

The protein resides in the plastid. Its subcellular location is the chloroplast. It catalyses the reaction Hydrolysis of terminal, non-reducing beta-D-glucosyl residues with release of beta-D-glucose.. The enzyme catalyses DIMBOA beta-D-glucoside + H2O = DIMBOA + D-glucose. It carries out the reaction DIBOA beta-D-glucoside + H2O = DIBOA + D-glucose. Its function is as follows. Acts in defense of young plant parts against pests via the production of hydroxamic acids from hydroxamic acid glucosides. Enzymatic activity is highly correlated with plant growth. The preferred substrate is DIMBOA-beta-D-glucoside. This chain is 4-hydroxy-7-methoxy-3-oxo-3,4-dihydro-2H-1,4-benzoxazin-2-yl glucoside beta-D-glucosidase 1c, chloroplastic (GLU1C), found in Triticum aestivum (Wheat).